Consider the following 974-residue polypeptide: Bifunctional glutamine synthetase adenylyltransferase/adenylyl-removing enzyme (974 aa).

An adenylyl removase region spans residues M1 to Q464. Residues L468–H974 are adenylyl transferase.

Belongs to the GlnE family. Requires Mg(2+) as cofactor.

It carries out the reaction [glutamine synthetase]-O(4)-(5'-adenylyl)-L-tyrosine + phosphate = [glutamine synthetase]-L-tyrosine + ADP. The catalysed reaction is [glutamine synthetase]-L-tyrosine + ATP = [glutamine synthetase]-O(4)-(5'-adenylyl)-L-tyrosine + diphosphate. Involved in the regulation of glutamine synthetase GlnA, a key enzyme in the process to assimilate ammonia. When cellular nitrogen levels are high, the C-terminal adenylyl transferase (AT) inactivates GlnA by covalent transfer of an adenylyl group from ATP to specific tyrosine residue of GlnA, thus reducing its activity. Conversely, when nitrogen levels are low, the N-terminal adenylyl removase (AR) activates GlnA by removing the adenylyl group by phosphorolysis, increasing its activity. The regulatory region of GlnE binds the signal transduction protein PII (GlnB) which indicates the nitrogen status of the cell. In Bartonella quintana (strain Toulouse) (Rochalimaea quintana), this protein is Bifunctional glutamine synthetase adenylyltransferase/adenylyl-removing enzyme.